The following is a 347-amino-acid chain: Phosphoribosylformylglycinamidine cyclo-ligase (347 aa).

It belongs to the AIR synthase family.

Its subcellular location is the cytoplasm. It catalyses the reaction 2-formamido-N(1)-(5-O-phospho-beta-D-ribosyl)acetamidine + ATP = 5-amino-1-(5-phospho-beta-D-ribosyl)imidazole + ADP + phosphate + H(+). It participates in purine metabolism; IMP biosynthesis via de novo pathway; 5-amino-1-(5-phospho-D-ribosyl)imidazole from N(2)-formyl-N(1)-(5-phospho-D-ribosyl)glycinamide: step 2/2. This Alcanivorax borkumensis (strain ATCC 700651 / DSM 11573 / NCIMB 13689 / SK2) protein is Phosphoribosylformylglycinamidine cyclo-ligase.